An 852-amino-acid polypeptide reads, in one-letter code: Elongation factor 2 (852 aa).

The region spanning 17-356 (RNIRNMSVIA…MIAFHLPSPV (340 aa)) is the tr-type G domain. 26-33 (AHVDHGKS) serves as a coordination point for GTP. 2 positions are modified to phosphothreonine: Thr-57 and Thr-59. Residues 170-173 (NKMD) and 227-229 (SGL) contribute to the GTP site. Position 709 is a diphthamide (His-709).

The protein belongs to the TRAFAC class translation factor GTPase superfamily. Classic translation factor GTPase family. EF-G/EF-2 subfamily. In terms of processing, phosphorylation by EF-2 kinase completely inactivates EF-2. Post-translationally, AMPylated by fic-1.

Its subcellular location is the cytoplasm. The catalysed reaction is GTP + H2O = GDP + phosphate + H(+). Functionally, catalyzes the GTP-dependent ribosomal translocation step during translation elongation. During this step, the ribosome changes from the pre-translocational (PRE) to the post-translocational (POST) state as the newly formed A-site-bound peptidyl-tRNA and P-site-bound deacylated tRNA move to the P and E sites, respectively. Catalyzes the coordinated movement of the two tRNA molecules, the mRNA and conformational changes in the ribosome. Involved in the morphogenesis of epidermal tissues. The protein is Elongation factor 2 (eef-2) of Caenorhabditis elegans.